Consider the following 361-residue polypeptide: Epoxyqueuosine reductase (361 aa).

The active-site Proton donor is the Asp147. One can recognise a 4Fe-4S ferredoxin-type domain in the interval Val193–Arg222. [4Fe-4S] cluster is bound by residues Cys202, Cys205, Cys208, Cys212, Cys228, Cys255, Cys258, and Cys262.

This sequence belongs to the QueG family. As to quaternary structure, monomer. Cob(II)alamin is required as a cofactor. Requires [4Fe-4S] cluster as cofactor.

It localises to the cytoplasm. The enzyme catalyses epoxyqueuosine(34) in tRNA + AH2 = queuosine(34) in tRNA + A + H2O. The protein operates within tRNA modification; tRNA-queuosine biosynthesis. Functionally, catalyzes the conversion of epoxyqueuosine (oQ) to queuosine (Q), which is a hypermodified base found in the wobble positions of tRNA(Asp), tRNA(Asn), tRNA(His) and tRNA(Tyr). The protein is Epoxyqueuosine reductase of Pseudomonas aeruginosa (strain ATCC 15692 / DSM 22644 / CIP 104116 / JCM 14847 / LMG 12228 / 1C / PRS 101 / PAO1).